Reading from the N-terminus, the 116-residue chain is U16-barytoxin-Tl1f (116 aa).

Residues 1 to 20 (MKTIIVFLSLLVLATKFGDA) form the signal peptide. A propeptide spanning residues 21–74 (NEGVNQEQMKEVIQNEFREDFLNEMAAMSLLQQLEAIESTLLEKEADRNSRQKR) is cleaved from the precursor. 3 cysteine pairs are disulfide-bonded: Cys-75–Cys-90, Cys-82–Cys-95, and Cys-89–Cys-110. N-linked (GlcNAc...) asparagine glycosylation occurs at Asn-85.

Belongs to the neurotoxin 14 (magi-1) family. 06 (ICK-Trit) subfamily. As to expression, expressed by the venom gland.

Its subcellular location is the secreted. Ion channel inhibitor. In Trittame loki (Brush-footed trapdoor spider), this protein is U16-barytoxin-Tl1f.